Consider the following 753-residue polypeptide: Polyribonucleotide nucleotidyltransferase (753 aa).

Residues aspartate 523 and aspartate 529 each contribute to the Mg(2+) site. The KH domain maps to 589–648; that stretch reads PRIISVRIPVDKIGAVIGPKGAMINQIQDDTGADITIEDDGTVLIGATDGASAEAARSAV. Residues 660–732 form the S1 motif domain; sequence GERYLGTVVK…DRGKLSLSPV (73 aa). The segment at 733–753 is disordered; the sequence is GAESDAVAETADAIESSQTEA.

Belongs to the polyribonucleotide nucleotidyltransferase family. It depends on Mg(2+) as a cofactor.

It is found in the cytoplasm. It carries out the reaction RNA(n+1) + phosphate = RNA(n) + a ribonucleoside 5'-diphosphate. Involved in mRNA degradation. Catalyzes the phosphorolysis of single-stranded polyribonucleotides processively in the 3'- to 5'-direction. The polypeptide is Polyribonucleotide nucleotidyltransferase (Micrococcus luteus (strain ATCC 4698 / DSM 20030 / JCM 1464 / CCM 169 / CCUG 5858 / IAM 1056 / NBRC 3333 / NCIMB 9278 / NCTC 2665 / VKM Ac-2230) (Micrococcus lysodeikticus)).